Consider the following 170-residue polypeptide: Ribosome maturation factor RimM (170 aa).

Residues 97-170 enclose the PRC barrel domain; it reads KNEFYWTDLI…QIRVEWGSDW (74 aa).

The protein belongs to the RimM family. Binds ribosomal protein uS19.

The protein localises to the cytoplasm. Functionally, an accessory protein needed during the final step in the assembly of 30S ribosomal subunit, possibly for assembly of the head region. Essential for efficient processing of 16S rRNA. May be needed both before and after RbfA during the maturation of 16S rRNA. It has affinity for free ribosomal 30S subunits but not for 70S ribosomes. The chain is Ribosome maturation factor RimM from Dechloromonas aromatica (strain RCB).